The primary structure comprises 436 residues: Lactonohydrolase oryL (436 aa).

Positions 1–27 (MLSYTSHCLQALLGVASLPYRQYQAYS) are cleaved as a signal peptide.

The protein belongs to the SMP-30/CGR1 family.

It participates in secondary metabolite biosynthesis. In terms of biological role, lactonohydrolase; part of the gene cluster that mediates the biosynthesis of oryzines, natural products with an unusual maleidride backbone. The two subunits of the fungal fatty acid synthase oryfasA and oryfasB probably form octenoic acid. This fatty acid is most likely activated by the acyl-CoA ligase oryP to give octenyl-CoA before the citrate synthase-like protein oryE catalyzes condensation with oxaloacetate to form tricarboxylic acid. The next steps of the pathways are conjectural, but a favorite possible route has been proposed, beginning with decarboxylation and concomitant dehydration by the decarboxylase oryM, followed by tautomerization, which may lead to the production of a diene intermediate. Reduction of this diene intermediate could give the known metabolite piliformic acid. On the pathway to oryzine B and oryzine A, however, hydroxylation of the diene by the alpha-ketoglutarate-dependent dioxygenase oryG and lactonisation by the lactonohydrolases oryH or oryL could give oryzine B directly. Finally, enoyl reduction by the dehydrogenase oryD would then convert oryzine B into oryzine A. The chain is Lactonohydrolase oryL from Aspergillus oryzae (strain ATCC 42149 / RIB 40) (Yellow koji mold).